Reading from the N-terminus, the 180-residue chain is Transcriptional repressor NrdR (180 aa).

A zinc finger spans residues C3 to C34. An ATP-cone domain is found at I49–D139. A disordered region spans residues Q148–S180. Polar residues predominate over residues E171 to S180.

The protein belongs to the NrdR family. Zn(2+) serves as cofactor.

Negatively regulates transcription of bacterial ribonucleotide reductase nrd genes and operons by binding to NrdR-boxes. This chain is Transcriptional repressor NrdR, found in Gloeothece citriformis (strain PCC 7424) (Cyanothece sp. (strain PCC 7424)).